The chain runs to 704 residues: Meprin A subunit beta (704 aa).

The signal sequence occupies residues 1–20; it reads MDARHWPWFLVFATFLLVSG. A propeptide spanning residues 21 to 64 is cleaved from the precursor; the sequence is LPAPEKFVKDIDGGIDQDIFDINEDLGLDLFEGDIKLEASGRNS. The Extracellular segment spans residues 21–654; that stretch reads LPAPEKFVKD…RCEKRGSTKD (634 aa). The 195-residue stretch at 63–257 folds into the Peptidase M12A domain; sequence NSIIGDNYRW…LKLNQLYSCT (195 aa). Intrachain disulfides connect Cys104–Cys256, Cys125–Cys145, and Cys266–Cys428. Residue His153 coordinates Zn(2+). Glu154 is an active-site residue. His157 and His163 together coordinate Zn(2+). N-linked (GlcNAc...) asparagine glycans are attached at residues Asn193, Asn219, Asn316, Asn422, Asn437, Asn528, Asn547, and Asn592. One can recognise an MAM domain in the interval 261–430; sequence SFMDSCDFEL…INLSETRCPH (170 aa). Positions 431-585 constitute an MATH domain; it reads HIWHIQNFTQ…GDDVYILLTV (155 aa). The EGF-like domain occupies 607–647; it reads VHNACSEVECQNGGICTLQEGRAECKCPAGEDWWYMGKRCE. 3 disulfides stabilise this stretch: Cys611–Cys622, Cys616–Cys631, and Cys633–Cys646. The helical transmembrane segment at 655–678 threads the bilayer; the sequence is TIVIAVSSTVTVFAVMLIITLISV. The Cytoplasmic segment spans residues 679-704; sequence YCTRRKYRKKASAKTAAMNLENQHAF. Thr693 carries the phosphothreonine modification.

In terms of assembly, homotetramer consisting of disulfide-linked beta subunits, or heterotetramer of two alpha and two beta subunits formed by non-covalent association of two disulfide-linked heterodimers. Interacts with MBL2 through its carbohydrate moiety. This interaction may inhibit its catalytic activity. Interacts with TSPAN8. It depends on Zn(2+) as a cofactor. In terms of processing, N-glycosylated; contains high mannose and/or complex biantennary structures. Proteolytically activated by trypsin in the intestinal lumen and kallikrein-related peptidases in other tissues. Post-translationally, phosphorylated by PKC at multiple sites of its cytoplasmic part. Phosphorylation dcreases activity at the cell surface, leading to diminished substrate cleavage. Kidney, intestinal brush borders and salivary ducts.

It localises to the cell membrane. It is found in the secreted. It catalyses the reaction Hydrolysis of proteins, including azocasein, and peptides. Hydrolysis of 5-His-|-Leu-6, 6-Leu-|-Cys-7, 14-Ala-|-Leu-15 and 19-Cys-|-Gly-20 bonds in insulin B chain.. With respect to regulation, strongly inhibited by fetuin-A/AHSG. Membrane metallopeptidase that sheds many membrane-bound proteins. Exhibits a strong preference for acidic amino acids at the P1' position. Known substrates include: FGF19, VGFA, IL1B, IL18, procollagen I and III, E-cadherin, KLK7, gastrin, ADAM10, tenascin-C. The presence of several pro-inflammatory cytokine among substrates implicate MEP1B in inflammation. It is also involved in tissue remodeling due to its capability to degrade extracellular matrix components. This is Meprin A subunit beta (Mep1b) from Rattus norvegicus (Rat).